A 1220-amino-acid polypeptide reads, in one-letter code: Plasma membrane calcium-transporting ATPase 3 (1220 aa).

Positions 1–20 (MGDMANSSIEFHPKPQQQRD) are enriched in polar residues. The disordered stretch occupies residues 1-23 (MGDMANSSIEFHPKPQQQRDVPQ). The Cytoplasmic portion of the chain corresponds to 1–97 (MGDMANSSIE…NFIPPKQPKT (97 aa)). Position 8 is a phosphoserine (Ser8). A helical transmembrane segment spans residues 98 to 118 (FLQLVWEALQDVTLIILEVAA). The Extracellular portion of the chain corresponds to 119–155 (IVSLGLSFYAPPGEESEACGNVSGGAEDEGEAEAGWI). A helical transmembrane segment spans residues 156–176 (EGAAILLSVICVVLVTAFNDW). Topologically, residues 177-364 (SKEKQFRGLQ…KEKSVLQGKL (188 aa)) are cytoplasmic. The disordered stretch occupies residues 298–355 (EEEKKDKKGKQQDGAMESSQTKAKKQDGAVAMEMQPLKSAEGGEMEEREKKKANAPKK). Composition is skewed to basic and acidic residues over residues 299-308 (EEKKDKKGKQ) and 342-355 (MEER…APKK). A helical transmembrane segment spans residues 365–384 (TKLAVQIGKAGLVMSAITVI). Topologically, residues 385 to 417 (ILVLYFVIETFVVEGRTWLAECTPVYVQYFVKF) are extracellular. Residues 418 to 435 (FIIGVTVLVVAVPEGLPL) form a helical membrane-spanning segment. The Cytoplasmic segment spans residues 436-849 (AVTISLAYSV…MWGRNVYDSI (414 aa)). Asp473 acts as the 4-aspartylphosphate intermediate in catalysis. Positions 794 and 798 each coordinate Mg(2+). Residues 850 to 869 (SKFLQFQLTVNVVAVIVAFT) traverse the membrane as a helical segment. The Extracellular portion of the chain corresponds to 870 to 879 (GACITQDSPL). A helical transmembrane segment spans residues 880 to 900 (KAVQMLWVNLIMDTFASLALA). The Cytoplasmic portion of the chain corresponds to 901 to 920 (TEPPTESLLLRKPYGRDKPL). The helical transmembrane segment at 921 to 943 (ISRTMMKNILGHAVYQLAIIFTL) threads the bilayer. Topologically, residues 944–961 (LFVGELFFDIDSGRNAPL) are extracellular. The helical transmembrane segment at 962-983 (HSPPSEHYTIIFNTFVMMQLFN) threads the bilayer. At 984 to 1002 (EINARKIHGERNVFDGIFS) the chain is on the cytoplasmic side. A helical membrane pass occupies residues 1003–1024 (NPIFCTIVLGTFGIQIVIVQFG). Residues 1025–1034 (GKPFSCSPLS) lie on the Extracellular side of the membrane. Residues 1035–1056 (TEQWLWCLFVGVGELVWGQVIA) form a helical membrane-spanning segment. Topologically, residues 1057–1220 (TIPTSQLKCL…SPLHSVETSL (164 aa)) are cytoplasmic. Residue Thr1079 is modified to Phosphothreonine. A calmodulin-binding subdomain A region spans residues 1097-1114 (LRRGQILWFRGLNRIQTQ). Thr1113 is subject to Phosphothreonine; by PKC. A calmodulin-binding subdomain B region spans residues 1115–1124 (IRVVKAFRSS). A disordered region spans residues 1166-1186 (ENEERLRAPPPPSPNQNNNAI).

The protein belongs to the cation transport ATPase (P-type) (TC 3.A.3) family. Type IIB subfamily. As to quaternary structure, interacts with PDZD11. Interacts (via N-terminus) with YWHAE. In terms of tissue distribution, highly expressed in the cerebellum. Expressed in adrenal glands.

The protein resides in the cell membrane. The protein localises to the presynaptic cell membrane. The enzyme catalyses Ca(2+)(in) + ATP + H2O = Ca(2+)(out) + ADP + phosphate + H(+). With respect to regulation, down-regulated by YWHAE. Its function is as follows. ATP-driven Ca(2+) ion pump involved in the maintenance of basal intracellular Ca(2+) levels at the presynaptic terminals. Uses ATP as an energy source to transport cytosolic Ca(2+) ions across the plasma membrane to the extracellular compartment. May counter-transport protons, but the mechanism and the stoichiometry of this Ca(2+)/H(+) exchange remains to be established. The sequence is that of Plasma membrane calcium-transporting ATPase 3 from Homo sapiens (Human).